Here is a 406-residue protein sequence, read N- to C-terminus: Arginine deiminase (406 aa).

Residue cysteine 396 is the Amidino-cysteine intermediate of the active site.

It belongs to the arginine deiminase family.

It localises to the cytoplasm. It carries out the reaction L-arginine + H2O = L-citrulline + NH4(+). It functions in the pathway amino-acid degradation; L-arginine degradation via ADI pathway; carbamoyl phosphate from L-arginine: step 1/2. The chain is Arginine deiminase from Vibrio vulnificus (strain CMCP6).